Here is a 391-residue protein sequence, read N- to C-terminus: Mannose-6-phosphate isomerase (391 aa).

4 residues coordinate Zn(2+): glutamine 97, histidine 99, glutamate 134, and histidine 255. The active site involves arginine 274.

This sequence belongs to the mannose-6-phosphate isomerase type 1 family. It depends on Zn(2+) as a cofactor.

The protein resides in the cytoplasm. It catalyses the reaction D-mannose 6-phosphate = D-fructose 6-phosphate. In terms of biological role, involved in the conversion of glucose to GDP-L-fucose, which can be converted to L-fucose, a capsular polysaccharide. This chain is Mannose-6-phosphate isomerase (manA), found in Salmonella typhimurium (strain LT2 / SGSC1412 / ATCC 700720).